A 238-amino-acid polypeptide reads, in one-letter code: Probable phosphatase phospho2 (238 aa).

Catalysis depends on Asp-8, which acts as the Nucleophile. Residues Asp-8 and Asp-10 each contribute to the Mg(2+) site. Asp-10 (proton donor) is an active-site residue. Asp-19 and Asp-99 together coordinate substrate. Asp-179 lines the Mg(2+) pocket.

This sequence belongs to the HAD-like hydrolase superfamily. PHOSPHO family. It depends on Mg(2+) as a cofactor.

Probable phosphatase. The sequence is that of Probable phosphatase phospho2 (phospho2) from Xenopus tropicalis (Western clawed frog).